The primary structure comprises 160 residues: Ribosome maturation factor RimP (160 aa).

This sequence belongs to the RimP family.

It is found in the cytoplasm. In terms of biological role, required for maturation of 30S ribosomal subunits. This Citrifermentans bemidjiense (strain ATCC BAA-1014 / DSM 16622 / JCM 12645 / Bem) (Geobacter bemidjiensis) protein is Ribosome maturation factor RimP.